Here is a 503-residue protein sequence, read N- to C-terminus: Cytochrome P450 11B1, mitochondrial (503 aa).

The transit peptide at 1–24 (MALWAKARVWMAGPWLSLHRARPL) directs the protein to the mitochondrion. A heme-binding site is contributed by C450.

This sequence belongs to the cytochrome P450 family. The cofactor is heme.

It is found in the mitochondrion inner membrane. It carries out the reaction a steroid + 2 reduced [adrenodoxin] + O2 + 2 H(+) = an 11beta-hydroxysteroid + 2 oxidized [adrenodoxin] + H2O. The catalysed reaction is 11-deoxycortisol + 2 reduced [adrenodoxin] + O2 + 2 H(+) = cortisol + 2 oxidized [adrenodoxin] + H2O. The enzyme catalyses 21-hydroxyprogesterone + 2 reduced [adrenodoxin] + O2 + 2 H(+) = corticosterone + 2 oxidized [adrenodoxin] + H2O. It catalyses the reaction corticosterone + 2 reduced [adrenodoxin] + O2 + 2 H(+) = 18-hydroxycorticosterone + 2 oxidized [adrenodoxin] + H2O. It carries out the reaction 18-hydroxycorticosterone + 2 reduced [adrenodoxin] + O2 + 2 H(+) = aldosterone + 2 oxidized [adrenodoxin] + 2 H2O. The catalysed reaction is 21-hydroxyprogesterone + 2 reduced [adrenodoxin] + O2 + 2 H(+) = 19-hydroxy-11-deoxycorticosterone + 2 oxidized [adrenodoxin] + H2O. The enzyme catalyses 19-hydroxy-11-deoxycorticosterone + 2 reduced [adrenodoxin] + O2 + 2 H(+) = 19-oxo-11-deoxycorticosterone + 2 oxidized [adrenodoxin] + 2 H2O. Its pathway is steroid biosynthesis; glucocorticoid biosynthesis. The protein operates within steroid hormone biosynthesis. Functionally, a cytochrome P450 monooxygenase that catalyzes the biosynthesis of aldosterone and other adrenal corticoids. Differing from other species (such as human, rat and mice), it is able to catalyze three sequential oxidative reactions of 11-deoxycorticosterone (21-hydroxyprogesterone), namely 11-beta hydroxylation, followed by two successive oxidations at C18 yielding 18-hydroxy and then 18-oxo intermediates, and ending with the formation of aldosterone. Steroid 11beta, 18- and 19-hydroxylase. Mechanistically, uses molecular oxygen inserting one oxygen atom into a substrate and reducing the second into a water molecule. Two electrons are provided by NADPH via a two-protein mitochondrial transfer system comprising flavoprotein FDXR (adrenodoxin/ferredoxin reductase) and nonheme iron-sulfur protein FDX1 or FDX2 (adrenodoxin/ferredoxin). This is Cytochrome P450 11B1, mitochondrial (CYP11B1) from Ovis aries (Sheep).